Here is a 359-residue protein sequence, read N- to C-terminus: Probable NAD(P)H nitroreductase PigM (359 aa).

The protein belongs to the nitroreductase family. Requires FMN as cofactor.

It functions in the pathway antibiotic biosynthesis; prodigiosin biosynthesis. Its function is as follows. Involved in the biosynthesis of 4-methoxy-2,2'-bipyrrole-5-carbaldehyde (MBC), one of the terminal products involved in the biosynthesis of the red antibiotic prodigiosin (Pig). Catalyzes the oxidation of the hydroxy group of 4-hydroxy-2,2'-bipyrrole-5-methanol (HBM) to yield 4-methoxy-2,2'-bipyrrole-5-carbaldehyde (MBC). This is Probable NAD(P)H nitroreductase PigM from Serratia sp. (strain ATCC 39006) (Prodigiosinella confusarubida).